We begin with the raw amino-acid sequence, 209 residues long: Imidazole glycerol phosphate synthase subunit HisH (209 aa).

In terms of domain architecture, Glutamine amidotransferase type-1 spans 1–205 (MIAIIDYGMG…KGVVETWKSS (205 aa)). The active-site Nucleophile is Cys79. Residues His180 and Glu182 contribute to the active site.

Heterodimer of HisH and HisF.

The protein resides in the cytoplasm. It carries out the reaction 5-[(5-phospho-1-deoxy-D-ribulos-1-ylimino)methylamino]-1-(5-phospho-beta-D-ribosyl)imidazole-4-carboxamide + L-glutamine = D-erythro-1-(imidazol-4-yl)glycerol 3-phosphate + 5-amino-1-(5-phospho-beta-D-ribosyl)imidazole-4-carboxamide + L-glutamate + H(+). It catalyses the reaction L-glutamine + H2O = L-glutamate + NH4(+). It participates in amino-acid biosynthesis; L-histidine biosynthesis; L-histidine from 5-phospho-alpha-D-ribose 1-diphosphate: step 5/9. In terms of biological role, IGPS catalyzes the conversion of PRFAR and glutamine to IGP, AICAR and glutamate. The HisH subunit catalyzes the hydrolysis of glutamine to glutamate and ammonia as part of the synthesis of IGP and AICAR. The resulting ammonia molecule is channeled to the active site of HisF. The chain is Imidazole glycerol phosphate synthase subunit HisH from Bacillus anthracis (strain A0248).